A 952-amino-acid polypeptide reads, in one-letter code: Plasma membrane ATPase 4 (952 aa).

Residues 1-64 (MAKAISLEEI…EKNESKILKF (64 aa)) are Cytoplasmic-facing. The chain crosses the membrane as a helical span at residues 65-84 (LGFMWNPLSWVMEAAAVMAI). The Extracellular segment spans residues 85–96 (ALANGDGKPPDW). The chain crosses the membrane as a helical span at residues 97–117 (QDFIGIICLLVINSTISFIEE). Residues 118–246 (NNAGNAAAAL…GHFQKVLTAI (129 aa)) are Cytoplasmic-facing. Residues 247-267 (GNFCICSIAIGMLVEIIVMYP) traverse the membrane as a helical segment. Topologically, residues 268 to 277 (IQHRKYRDGI) are extracellular. The helical transmembrane segment at 278-299 (DNLLVLLIGGIPIAMPTVLSVT) threads the bilayer. At 300 to 646 (MAIGSHRLSQ…TSRAIFQRMK (347 aa)) the chain is on the cytoplasmic side. The active-site 4-aspartylphosphate intermediate is D332. Mg(2+) contacts are provided by D591 and D595. A helical membrane pass occupies residues 647-668 (NYTIYAVSITIRIVFGFMFIAL). Topologically, residues 669–673 (IWKYD) are extracellular. A helical transmembrane segment spans residues 674–696 (FSAFMVLIIAILNDGTIMTISKD). Topologically, residues 697–712 (RVKPSPMPDSWKLKEI) are cytoplasmic. A helical membrane pass occupies residues 713–733 (FATGVVLGGYQALMTVVFFWA). Residues 734-754 (MHDTDFFSDKFGVKSLRNSDE) are Extracellular-facing. The helical transmembrane segment at 755 to 775 (EMMSALYLQVSIISQALIFVT) threads the bilayer. Residues 776–787 (RSRSWSFLERPG) lie on the Cytoplasmic side of the membrane. Residues 788–808 (MLLVIAFMIAQLVATLIAVYA) traverse the membrane as a helical segment. Topologically, residues 809 to 817 (NWAFARVKG) are extracellular. The chain crosses the membrane as a helical span at residues 818-838 (CGWGWAGVIWLYSIIFYLPLD). Topologically, residues 839-952 (IMKFAIRYIL…IETIQQHYTV (114 aa)) are cytoplasmic.

This sequence belongs to the cation transport ATPase (P-type) (TC 3.A.3) family. Type IIIA subfamily. Expressed at high levels in root, stem, leaf and flower.

Its subcellular location is the cell membrane. It carries out the reaction ATP + H2O + H(+)(in) = ADP + phosphate + 2 H(+)(out). In terms of biological role, the plasma membrane ATPase of plants and fungi is a hydrogen ion pump. The proton gradient it generates drives the active transport of nutrients by H(+)-symport. The resulting external acidification and/or internal alkinization may mediate growth responses. The polypeptide is Plasma membrane ATPase 4 (PMA4) (Nicotiana plumbaginifolia (Leadwort-leaved tobacco)).